We begin with the raw amino-acid sequence, 566 residues long: Transmembrane protein 151B (566 aa).

Residues 1–11 are compositionally biased toward low complexity; it reads MSPPGSAAGES. The interval 1-25 is disordered; the sequence is MSPPGSAAGESAAGGGGGGGGPGVS. The segment covering 12 to 23 has biased composition (gly residues); that stretch reads AAGGGGGGGGPG. The next 2 membrane-spanning stretches (helical) occupy residues 65 to 85 and 112 to 132; these read CLLLSLLMYGCLGAVAWCHVT and YVYIPLAFLLMLYAVYLVECW. Residues 495-512 show a composition bias toward polar residues; it reads VNEASCPTEQTRLSSQAS. The segment at 495–529 is disordered; that stretch reads VNEASCPTEQTRLSSQASMGDDEDDDEEEAGPPPP. Positions 514-524 are enriched in acidic residues; it reads GDDEDDDEEEA.

This sequence belongs to the TMEM151 family.

Its subcellular location is the membrane. The sequence is that of Transmembrane protein 151B (TMEM151B) from Homo sapiens (Human).